The chain runs to 432 residues: Adenylosuccinate synthetase (432 aa).

GTP is bound by residues 12–18 (GDEGKGK) and 40–42 (GHT). Aspartate 13 serves as the catalytic Proton acceptor. The Mg(2+) site is built by aspartate 13 and glycine 40. IMP-binding positions include 13-16 (DEGK), 38-41 (NAGH), threonine 130, arginine 144, glutamine 225, threonine 240, and arginine 304. Histidine 41 functions as the Proton donor in the catalytic mechanism. Substrate is bound at residue 300–306 (ATTGRRR). GTP contacts are provided by residues arginine 306, 332–334 (KLD), and 415–417 (SVG).

Belongs to the adenylosuccinate synthetase family. Homodimer. The cofactor is Mg(2+).

The protein resides in the cytoplasm. It carries out the reaction IMP + L-aspartate + GTP = N(6)-(1,2-dicarboxyethyl)-AMP + GDP + phosphate + 2 H(+). It functions in the pathway purine metabolism; AMP biosynthesis via de novo pathway; AMP from IMP: step 1/2. Its function is as follows. Plays an important role in the de novo pathway of purine nucleotide biosynthesis. Catalyzes the first committed step in the biosynthesis of AMP from IMP. The protein is Adenylosuccinate synthetase of Syntrophus aciditrophicus (strain SB).